Consider the following 112-residue polypeptide: MGVKAYLDGILGEDKACKFLKKQGFEILKRNFHSKFGEIDIIAKKDEILHFIEIKFTQNNYEVSERLDRKKLEKILKTIEFYHLKNGISSDFQIDLICIKNDVIQFCENISF.

Belongs to the UPF0102 family.

In Campylobacter jejuni subsp. doylei (strain ATCC BAA-1458 / RM4099 / 269.97), this protein is UPF0102 protein JJD26997_0163.